A 73-amino-acid polypeptide reads, in one-letter code: Large ribosomal subunit protein bL31 (73 aa).

It belongs to the bacterial ribosomal protein bL31 family. Type A subfamily. As to quaternary structure, part of the 50S ribosomal subunit.

Binds the 23S rRNA. This Bartonella tribocorum (strain CIP 105476 / IBS 506) protein is Large ribosomal subunit protein bL31.